Here is a 157-residue protein sequence, read N- to C-terminus: Transcription elongation factor GreA (157 aa).

A coiled-coil region spans residues 14–37 (LRKELERLLKRRPLITEAIAEARE).

Belongs to the GreA/GreB family.

In terms of biological role, necessary for efficient RNA polymerase transcription elongation past template-encoded arresting sites. The arresting sites in DNA have the property of trapping a certain fraction of elongating RNA polymerases that pass through, resulting in locked ternary complexes. Cleavage of the nascent transcript by cleavage factors such as GreA or GreB allows the resumption of elongation from the new 3'terminus. GreA releases sequences of 2 to 3 nucleotides. The polypeptide is Transcription elongation factor GreA (Vibrio vulnificus (strain CMCP6)).